The following is a 424-amino-acid chain: Serine--tRNA ligase (424 aa).

Residue 230–232 coordinates L-serine; sequence TAE. Residue 261-263 coordinates ATP; sequence RAE. Glu284 serves as a coordination point for L-serine. 348 to 351 is a binding site for ATP; that stretch reads EISS. Ser384 is a binding site for L-serine.

The protein belongs to the class-II aminoacyl-tRNA synthetase family. Type-1 seryl-tRNA synthetase subfamily. As to quaternary structure, homodimer. The tRNA molecule binds across the dimer.

The protein localises to the cytoplasm. The catalysed reaction is tRNA(Ser) + L-serine + ATP = L-seryl-tRNA(Ser) + AMP + diphosphate + H(+). It catalyses the reaction tRNA(Sec) + L-serine + ATP = L-seryl-tRNA(Sec) + AMP + diphosphate + H(+). It functions in the pathway aminoacyl-tRNA biosynthesis; selenocysteinyl-tRNA(Sec) biosynthesis; L-seryl-tRNA(Sec) from L-serine and tRNA(Sec): step 1/1. In terms of biological role, catalyzes the attachment of serine to tRNA(Ser). Is also able to aminoacylate tRNA(Sec) with serine, to form the misacylated tRNA L-seryl-tRNA(Sec), which will be further converted into selenocysteinyl-tRNA(Sec). This Carboxydothermus hydrogenoformans (strain ATCC BAA-161 / DSM 6008 / Z-2901) protein is Serine--tRNA ligase.